Here is a 170-residue protein sequence, read N- to C-terminus: Thialysine N-epsilon-acetyltransferase (170 aa).

Positions 4 to 166 (VLIREAKEGD…FRFEGEAMRE (163 aa)) constitute an N-acetyltransferase domain. 27-28 (YE) contributes to the substrate binding site. Lysine 29 carries the post-translational modification N6-acetyllysine. Glutamate 92 is a binding site for substrate. Acetyl-CoA is bound by residues 94-96 (IYV), 102-107 (GQGIGS), 133-135 (NKK), and tyrosine 140. Tyrosine 140 (proton donor) is an active-site residue. Position 152 (glutamate 152) interacts with substrate.

The protein belongs to the acetyltransferase family. Homodimer.

The protein resides in the cytoplasm. It catalyses the reaction S-(2-aminoethyl)-L-cysteine + acetyl-CoA = S-(2-acetamidoethyl)-L-cysteine + CoA + H(+). It carries out the reaction an alkane-alpha,omega-diamine + acetyl-CoA = an N-acetylalkane-alpha,omega-diamine + CoA + H(+). In terms of biological role, catalyzes the N-acetylation of the amino acid thialysine (S-(2-aminoethyl)-L-cysteine), a L-lysine analog with the 4-methylene group substituted with a sulfur. May also catalyze acetylation of polyamines, such as norspermidine, spermidine or spermine. However, ability to acetylate polyamines is weak, suggesting that it does not act as a diamine acetyltransferase in vivo. This is Thialysine N-epsilon-acetyltransferase from Sus scrofa (Pig).